We begin with the raw amino-acid sequence, 194 residues long: Inosine triphosphate pyrophosphatase (194 aa).

11 to 16 is a binding site for ITP; the sequence is TGNAKK. Residue Glu-39 coordinates Mg(2+). Residues Lys-51, 67 to 68, Lys-84, 143 to 146, Lys-166, and 171 to 172 each bind ITP; these read DT, FGWD, and HR.

It belongs to the HAM1 NTPase family. Homodimer. It depends on Mg(2+) as a cofactor. The cofactor is Mn(2+).

It localises to the cytoplasm. It catalyses the reaction ITP + H2O = IMP + diphosphate + H(+). The enzyme catalyses dITP + H2O = dIMP + diphosphate + H(+). It carries out the reaction XTP + H2O = XMP + diphosphate + H(+). In terms of biological role, pyrophosphatase that hydrolyzes non-canonical purine nucleotides such as inosine triphosphate (ITP), deoxyinosine triphosphate (dITP) or xanthosine 5'-triphosphate (XTP) to their respective monophosphate derivatives. The enzyme does not distinguish between the deoxy- and ribose forms. Probably excludes non-canonical purines from RNA and DNA precursor pools, thus preventing their incorporation into RNA and DNA and avoiding chromosomal lesions. This Dictyostelium discoideum (Social amoeba) protein is Inosine triphosphate pyrophosphatase (itpa).